A 215-amino-acid chain; its full sequence is Proteasome subunit beta type-1 (215 aa).

The residue at position 1 (Met1) is an N-acetylmethionine. A propeptide spans 1-19 (MNGIQVDINRLKKGEVSLG) (removed in mature form). Thr20 serves as the catalytic Nucleophile.

Belongs to the peptidase T1B family. As to quaternary structure, the 26S proteasome consists of a 20S proteasome core and two 19S regulatory subunits. The 20S proteasome core is composed of 28 subunits that are arranged in four stacked rings, resulting in a barrel-shaped structure. The two end rings are each formed by seven alpha subunits, and the two central rings are each formed by seven beta subunits. The catalytic chamber with the active sites is on the inside of the barrel.

The protein localises to the cytoplasm. Its subcellular location is the nucleus. The catalysed reaction is Cleavage of peptide bonds with very broad specificity.. In terms of biological role, the proteasome degrades poly-ubiquitinated proteins in the cytoplasm and in the nucleus. It is essential for the regulated turnover of proteins and for the removal of misfolded proteins. The proteasome is a multicatalytic proteinase complex that is characterized by its ability to cleave peptides with Arg, Phe, Tyr, Leu, and Glu adjacent to the leaving group at neutral or slightly basic pH. It has an ATP-dependent proteolytic activity. PRE3 and PRE4 are necessary for the peptidyl-glutamyl-peptide-hydrolyzing activity. This subunit is necessary for the peptidylglutamyl-peptide hydrolyzing activity. The sequence is that of Proteasome subunit beta type-1 (PRE3) from Saccharomyces cerevisiae (strain ATCC 204508 / S288c) (Baker's yeast).